We begin with the raw amino-acid sequence, 348 residues long: Isopentenyl-diphosphate delta-isomerase (348 aa).

11–12 (RK) provides a ligand contact to substrate. Residues 70-72 (AMT), serine 100, and asparagine 131 each bind FMN. 100-102 (SQR) serves as a coordination point for substrate. Glutamine 165 lines the substrate pocket. Glutamate 166 provides a ligand contact to Mg(2+). Residues lysine 197, threonine 231, 278-280 (GIR), and 299-300 (AR) contribute to the FMN site.

Belongs to the IPP isomerase type 2 family. As to quaternary structure, homooctamer. Dimer of tetramers. Requires FMN as cofactor. It depends on NADPH as a cofactor. Mg(2+) is required as a cofactor.

The protein resides in the cytoplasm. It catalyses the reaction isopentenyl diphosphate = dimethylallyl diphosphate. Involved in the biosynthesis of isoprenoids. Catalyzes the 1,3-allylic rearrangement of the homoallylic substrate isopentenyl (IPP) to its allylic isomer, dimethylallyl diphosphate (DMAPP). The protein is Isopentenyl-diphosphate delta-isomerase of Mycobacterium marinum (strain ATCC BAA-535 / M).